Reading from the N-terminus, the 183-residue chain is RNA pyrophosphohydrolase (183 aa).

Residues 6 to 149 (GYRPNVGIIL…KREVYRLALE (144 aa)) enclose the Nudix hydrolase domain. The short motif at 38-59 (GGINAGETPEQAMFRELEEEVG) is the Nudix box element.

It belongs to the Nudix hydrolase family. RppH subfamily. A divalent metal cation is required as a cofactor.

In terms of biological role, accelerates the degradation of transcripts by removing pyrophosphate from the 5'-end of triphosphorylated RNA, leading to a more labile monophosphorylated state that can stimulate subsequent ribonuclease cleavage. This Thiobacillus denitrificans (strain ATCC 25259 / T1) protein is RNA pyrophosphohydrolase.